The sequence spans 460 residues: NADH-ubiquinone oxidoreductase chain 4 (460 aa).

The next 12 helical transmembrane spans lie at 20–42, 61–81, 93–113, 114–134, 148–168, 195–215, 225–245, 258–278, 285–304, 308–330, 351–371, and 394–414; these read PKWL…LMWF, PLST…ILAS, QRLY…AFGA, TEII…LIII, TYFL…LLLL, IWWA…GVHL, PVAG…YGMM, LAYP…SICL, SLIA…GILI, WGFS…LFCL, IIFP…LALP, and ILLT…MFLM.

This sequence belongs to the complex I subunit 4 family.

The protein resides in the mitochondrion membrane. It catalyses the reaction a ubiquinone + NADH + 5 H(+)(in) = a ubiquinol + NAD(+) + 4 H(+)(out). Functionally, core subunit of the mitochondrial membrane respiratory chain NADH dehydrogenase (Complex I) that is believed to belong to the minimal assembly required for catalysis. Complex I functions in the transfer of electrons from NADH to the respiratory chain. The immediate electron acceptor for the enzyme is believed to be ubiquinone. The polypeptide is NADH-ubiquinone oxidoreductase chain 4 (MT-ND4) (Carassius auratus (Goldfish)).